The primary structure comprises 1002 residues: Leucine-rich repeat receptor-like serine/threonine-protein kinase BAM2 (1002 aa).

Positions 1-22 are cleaved as a signal peptide; sequence MKLLLLLLLLLLLHISHSFTVA. At 23 to 636 the chain is on the extracellular side; it reads KPITELHALL…SHVKPLSATT (614 aa). N-linked (GlcNAc...) asparagine glycosylation is found at Asn-51, Asn-80, Asn-97, Asn-123, Asn-130, Asn-153, and Asn-164. 22 LRR repeats span residues 68–92, 93–116, 118–140, 141–165, 167–188, 189–213, 215–238, 239–262, 263–285, 286–309, 311–334, 335–358, 359–382, 384–406, 407–430, 431–456, 458–479, 480–503, 505–527, 528–551, 552–575, and 577–600; these read LRHV…VAHL, PLLQ…ISNL, ELRH…LSSG, LVNL…LTNL, QLRH…TYGT, WPVL…IGNL, TLRE…IGNL, SELV…IGKL, QKLD…ELGL, ISSL…SFSQ, KNLT…IGEM, PELE…LGEN, GRLV…MCSG, RLMT…LGKC, ESLT…LFGL, PKLS…GVSG, LGQI…IGNL, SGVQ…IGRL, QLSK…ISRC, KLLT…LTGM, KILN…IASM, and SLTS…QFSY. N-linked (GlcNAc...) asparagine glycosylation is found at Asn-212 and Asn-237. N-linked (GlcNAc...) asparagine glycans are attached at residues Asn-312 and Asn-346. The N-linked (GlcNAc...) asparagine glycan is linked to Asn-420. Asn-478 carries an N-linked (GlcNAc...) asparagine glycan. Residues Asn-558, Asn-587, and Asn-602 are each glycosylated (N-linked (GlcNAc...) asparagine). Residues 637-657 traverse the membrane as a helical segment; sequence KLLLVLGLLFCSMVFAIVAII. Over 658–1002 the chain is Cytoplasmic; it reads KARSLRNASE…SGSPPDLLSN (345 aa). A Phosphothreonine modification is found at Thr-682. One can recognise a Protein kinase domain in the interval 690–967; that stretch reads LKEDNIIGKG…VQILTEIPKI (278 aa). ATP contacts are provided by residues 696 to 704 and Lys-718; that span reads IGKGGAGIV. 2 positions are modified to phosphotyrosine: Tyr-765 and Tyr-803. The Proton acceptor role is filled by Asp-816. Position 851 is a phosphoserine (Ser-851). Residues Tyr-859 and Tyr-866 each carry the phosphotyrosine modification. Thr-867 bears the Phosphothreonine mark. Residues 969–1002 form a disordered region; the sequence is LSKQQAAESDVTEKAPAINESSPDSGSPPDLLSN. A compositionally biased stretch (low complexity) spans 989–1002; that stretch reads SSPDSGSPPDLLSN.

Belongs to the protein kinase superfamily. Ser/Thr protein kinase family. As to quaternary structure, interacts with BAM1 and CLV1. Binds to the CLV3, CLE11, CLE18, CLE19, CLE22, CLE25, CLE26, CLE40, CLE41 and CLE42 mature peptides, probably via its extracellular leucine-rich repeat region. As to expression, expressed in seedlings, roots, rosette leaves, stems, inflorescences, flowers and siliques.

The protein resides in the cell membrane. The catalysed reaction is L-seryl-[protein] + ATP = O-phospho-L-seryl-[protein] + ADP + H(+). It catalyses the reaction L-threonyl-[protein] + ATP = O-phospho-L-threonyl-[protein] + ADP + H(+). Its function is as follows. Necessary for male gametophyte development, as well as ovule specification and function. Involved in cell-cell communication process required during early anther development, and regulating cell division and differentiation to organize cell layers. Required for the development of high-ordered vascular strands within the leaf and a correlated control of leaf shape, size and symmetry. May regulate the CLV1-dependent CLV3-mediated signaling in meristems maintenance. The chain is Leucine-rich repeat receptor-like serine/threonine-protein kinase BAM2 (BAM2) from Arabidopsis thaliana (Mouse-ear cress).